The following is a 61-amino-acid chain: Large ribosomal subunit protein bL32 (61 aa).

A compositionally biased stretch (basic residues) spans 1–22 (MAVPKKKTSKSRRDMRRSHHAL). Residues 1 to 27 (MAVPKKKTSKSRRDMRRSHHALKPSAY) are disordered.

The protein belongs to the bacterial ribosomal protein bL32 family.

The chain is Large ribosomal subunit protein bL32 from Rhodospirillum rubrum (strain ATCC 11170 / ATH 1.1.1 / DSM 467 / LMG 4362 / NCIMB 8255 / S1).